The sequence spans 670 residues: ATP synthase subunit alpha 2 (670 aa).

180-187 (GDRATGKT) contributes to the ATP binding site. The segment at 525–670 (MPAEDAAGDI…DAEAEARHKR (146 aa)) is disordered. Over residues 543–588 (ARGDADRDADHGANREVSREVSPEASREVSREVSREVSHEADRDAA) the composition is skewed to basic and acidic residues. Residues 589–599 (ADAARVAGRAP) are compositionally biased toward low complexity. A compositionally biased stretch (basic and acidic residues) spans 621-639 (ADGDRASASRPPPDARGDA). Over residues 650–661 (ADANVNADANVD) the composition is skewed to low complexity.

It belongs to the ATPase alpha/beta chains family. As to quaternary structure, F-type ATPases have 2 components, CF(1) - the catalytic core - and CF(0) - the membrane proton channel. CF(1) has five subunits: alpha(3), beta(3), gamma(1), delta(1), epsilon(1). CF(0) has three main subunits: a(1), b(2) and c(9-12). The alpha and beta chains form an alternating ring which encloses part of the gamma chain. CF(1) is attached to CF(0) by a central stalk formed by the gamma and epsilon chains, while a peripheral stalk is formed by the delta and b chains.

Its subcellular location is the cell inner membrane. The enzyme catalyses ATP + H2O + 4 H(+)(in) = ADP + phosphate + 5 H(+)(out). Its function is as follows. Produces ATP from ADP in the presence of a proton gradient across the membrane. The alpha chain is a regulatory subunit. In Burkholderia mallei (strain NCTC 10247), this protein is ATP synthase subunit alpha 2.